The primary structure comprises 337 residues: MGRPRVLSGVQPTGALHLGNWLGAIRNWVDLQDTHDTFVCVVDLHAITVPHDPARLADDTLNTAALYLACGMDPQRCSIFIQSQVAAHSELCWLLNCVTPLNWLERMIQFKEKAVKQGDNVSVGLLDYPVLMAADILLYDADLVPVGEDQKQHLELARDIAQQRINARFGSEERPVLKVPKPLILKEGARVMSLTDGRSKMSKSDPNEGSRITLLDPPELITKKIKRAKTDPKRGLEFSNPDRPETDNLLGLYAILSGKGREAAADECADMGWGQFKPLLADAAVAALEPIQARHKELMADRVELDRVLAKGRDQAESVANASLERVRDALGFAKCS.

ATP is bound by residues 11–13 (QPT) and 19–20 (GN). The short motif at 12 to 20 (PTGALHLGN) is the 'HIGH' region element. Residue Asp135 coordinates L-tryptophan. ATP contacts are provided by residues 147 to 149 (GED), Val191, and 200 to 204 (KMSKS). The 'KMSKS' region motif lies at 200-204 (KMSKS).

Belongs to the class-I aminoacyl-tRNA synthetase family. As to quaternary structure, homodimer.

It localises to the cytoplasm. The enzyme catalyses tRNA(Trp) + L-tryptophan + ATP = L-tryptophyl-tRNA(Trp) + AMP + diphosphate + H(+). Catalyzes the attachment of tryptophan to tRNA(Trp). This is Tryptophan--tRNA ligase from Parasynechococcus marenigrum (strain WH8102).